The chain runs to 204 residues: Phosphatidylserine decarboxylase proenzyme (204 aa).

Ser-169 acts as the Schiff-base intermediate with substrate; via pyruvic acid in catalysis. Ser-169 carries the post-translational modification Pyruvic acid (Ser); by autocatalysis.

This sequence belongs to the phosphatidylserine decarboxylase family. PSD-A subfamily. As to quaternary structure, heterodimer of a large membrane-associated beta subunit and a small pyruvoyl-containing alpha subunit. The cofactor is pyruvate. Post-translationally, is synthesized initially as an inactive proenzyme. Formation of the active enzyme involves a self-maturation process in which the active site pyruvoyl group is generated from an internal serine residue via an autocatalytic post-translational modification. Two non-identical subunits are generated from the proenzyme in this reaction, and the pyruvate is formed at the N-terminus of the alpha chain, which is derived from the carboxyl end of the proenzyme. The post-translation cleavage follows an unusual pathway, termed non-hydrolytic serinolysis, in which the side chain hydroxyl group of the serine supplies its oxygen atom to form the C-terminus of the beta chain, while the remainder of the serine residue undergoes an oxidative deamination to produce ammonia and the pyruvoyl prosthetic group on the alpha chain.

The protein localises to the cell membrane. It catalyses the reaction a 1,2-diacyl-sn-glycero-3-phospho-L-serine + H(+) = a 1,2-diacyl-sn-glycero-3-phosphoethanolamine + CO2. The protein operates within phospholipid metabolism; phosphatidylethanolamine biosynthesis; phosphatidylethanolamine from CDP-diacylglycerol: step 2/2. In terms of biological role, catalyzes the formation of phosphatidylethanolamine (PtdEtn) from phosphatidylserine (PtdSer). The sequence is that of Phosphatidylserine decarboxylase proenzyme from Solibacter usitatus (strain Ellin6076).